We begin with the raw amino-acid sequence, 389 residues long: Chalcone synthase E (389 aa).

The active site involves C164.

It belongs to the thiolase-like superfamily. Chalcone/stilbene synthases family.

It carries out the reaction (E)-4-coumaroyl-CoA + 3 malonyl-CoA + 3 H(+) = 2',4,4',6'-tetrahydroxychalcone + 3 CO2 + 4 CoA. Its pathway is secondary metabolite biosynthesis; flavonoid biosynthesis. Functionally, the primary product of this enzyme is 4,2',4',6'-tetrahydroxychalcone (also termed naringenin-chalcone or chalcone) which can under specific conditions spontaneously isomerize into naringenin. The sequence is that of Chalcone synthase E (CHSE) from Ipomoea nil (Japanese morning glory).